A 149-amino-acid chain; its full sequence is Alpha-amylase/trypsin inhibitor CMb (149 aa).

The signal sequence occupies residues 1–24 (MASKSSCDLLLAAVLVSIFAAVAA). Asn-124 carries an N-linked (GlcNAc...) asparagine glycan.

Belongs to the protease inhibitor I6 (cereal trypsin/alpha-amylase inhibitor) family. In terms of assembly, heterotetramer of one CMa, one CMb and two CMd chains. In terms of processing, five disulfide bonds, which are essential for the inhibitor activity, are probably present. Post-translationally, exists both in a glycosylated and in an unglycosylated form. The glycosylated form is a potent allergen. Endosperm.

The protein resides in the secreted. Its function is as follows. Part of a complex with inhibitory activity, but CMb is inactive as a separate subunit. The polypeptide is Alpha-amylase/trypsin inhibitor CMb (IAT2) (Hordeum vulgare (Barley)).